Reading from the N-terminus, the 120-residue chain is Large ribosomal subunit protein uL18 (120 aa).

The protein belongs to the universal ribosomal protein uL18 family. Part of the 50S ribosomal subunit; part of the 5S rRNA/L5/L18/L25 subcomplex. Contacts the 5S and 23S rRNAs.

Functionally, this is one of the proteins that bind and probably mediate the attachment of the 5S RNA into the large ribosomal subunit, where it forms part of the central protuberance. The protein is Large ribosomal subunit protein uL18 of Agrobacterium fabrum (strain C58 / ATCC 33970) (Agrobacterium tumefaciens (strain C58)).